The following is a 330-amino-acid chain: Protein IN CHLOROPLAST ATPASE BIOGENESIS, chloroplastic (330 aa).

A chloroplast-targeting transit peptide spans M1–K35.

Interacts with ATPC1.

It is found in the plastid. The protein resides in the chloroplast stroma. In terms of biological role, involved in the assembly of the F(1) ATP synthase in chloroplast thylakoid membranes. Functions downstream of the CPN60 chaperones to promote assembly of the catalytically active core of the chloroplast ATP synthase. Assists the assembly of the ATP synthase gamma subunit into the active F(1) core downstream of CPN60-mediated folding, which is critical for the biogenesis of the chloroplast ATP synthase. In Arabidopsis thaliana (Mouse-ear cress), this protein is Protein IN CHLOROPLAST ATPASE BIOGENESIS, chloroplastic.